Reading from the N-terminus, the 159-residue chain is 17 kDa surface antigen (159 aa).

The N-terminal stretch at 1-19 (MKLLSKIMIIALAASMLQA) is a signal peptide. A lipid anchor (N-palmitoyl cysteine) is attached at Cys-20. Cys-20 carries S-diacylglycerol cysteine lipidation.

This sequence belongs to the rickettsiale 17 kDa surface antigen family.

It is found in the cell outer membrane. The sequence is that of 17 kDa surface antigen (omp) from Rickettsia prowazekii (strain Madrid E).